Here is a 149-residue protein sequence, read N- to C-terminus: Small ribosomal subunit protein uS15 (149 aa).

The span at 1-14 (MGRMHTHRHGKSHS) shows a compositional bias: basic residues. Residues 1–20 (MGRMHTHRHGKSHSIRPATL) form a disordered region.

Belongs to the universal ribosomal protein uS15 family. In terms of assembly, part of the 30S ribosomal subunit.

This chain is Small ribosomal subunit protein uS15, found in Nitrosopumilus maritimus (strain SCM1).